The primary structure comprises 121 residues: Centrocin 2 (121 aa).

The signal sequence occupies residues 1–20; it reads MMIKIAVVLCAVMATSMVFA. Positions 21–50 are excised as a propeptide; the sequence is NDVKEQELADLLDLLISEEVSSPDDAVAES. 2 positions are modified to 6'-bromotryptophan: W51 and W59. Residues C77 and C112 are joined by a disulfide bond. Residues 83–106 constitute a propeptide that is removed on maturation; sequence SPQEARAKVLEAFPEMKESDLDEE. Q107 is modified (pyrrolidone carboxylic acid). H119 is modified (histidine amide).

In terms of assembly, heterodimer of a light and a heavy chain, probably disulfide-linked.

Has antimicrobial activity against Gram-negative bacteria, Gram-positive bacteria and against fungi with minimum inhibitory concentration (MIC) between 0.78 uM and 50 uM. Shows little hemolytic activity at concentrations up to 12.5 uM but &gt;50% lysis at 100 uM. This chain is Centrocin 2, found in Echinus esculentus (Sea urchin).